The sequence spans 330 residues: GTPase Obg (330 aa).

The region spanning 1–159 (MHFIDEVKIY…MWIHLRLKLL (159 aa)) is the Obg domain. Positions 160 to 327 (SDVGLVGLPN…IVKLALEIIK (168 aa)) constitute an OBG-type G domain. GTP-binding positions include 166-173 (GLPNAGKS), 191-195 (FTTLV), 212-215 (DIPG), 279-282 (NKCD), and 308-310 (STY). Positions 173 and 193 each coordinate Mg(2+).

Belongs to the TRAFAC class OBG-HflX-like GTPase superfamily. OBG GTPase family. Monomer. The cofactor is Mg(2+).

The protein resides in the cytoplasm. An essential GTPase which binds GTP, GDP and possibly (p)ppGpp with moderate affinity, with high nucleotide exchange rates and a fairly low GTP hydrolysis rate. Plays a role in control of the cell cycle, stress response, ribosome biogenesis and in those bacteria that undergo differentiation, in morphogenesis control. The polypeptide is GTPase Obg (Rickettsia typhi (strain ATCC VR-144 / Wilmington)).